The following is a 145-amino-acid chain: MKVLFNRLHSHDLPLPRYMTPGSSGLDLYAAVDEEILIPSGKIVLVPTGLALAIPEGYEAQIRPRSGLALKYGITLLNTPGTIDADYRGEIKVIVINLGDKDYILKRGERIAQMVFSRVEKAEFMEVKSLDETLRGAGGFGHTGI.

Substrate is bound by residues 65–67 (RSG), Asn78, 82–84 (TID), and Lys92.

The protein belongs to the dUTPase family. Mg(2+) is required as a cofactor.

It catalyses the reaction dUTP + H2O = dUMP + diphosphate + H(+). It participates in pyrimidine metabolism; dUMP biosynthesis; dUMP from dCTP (dUTP route): step 2/2. This enzyme is involved in nucleotide metabolism: it produces dUMP, the immediate precursor of thymidine nucleotides and it decreases the intracellular concentration of dUTP so that uracil cannot be incorporated into DNA. This Syntrophomonas wolfei subsp. wolfei (strain DSM 2245B / Goettingen) protein is Deoxyuridine 5'-triphosphate nucleotidohydrolase.